A 122-amino-acid chain; its full sequence is Large ribosomal subunit protein uL18 (122 aa).

Belongs to the universal ribosomal protein uL18 family. As to quaternary structure, part of the 50S ribosomal subunit; part of the 5S rRNA/L5/L18/L25 subcomplex. Contacts the 5S and 23S rRNAs.

This is one of the proteins that bind and probably mediate the attachment of the 5S RNA into the large ribosomal subunit, where it forms part of the central protuberance. The protein is Large ribosomal subunit protein uL18 of Mycobacterium ulcerans (strain Agy99).